A 506-amino-acid chain; its full sequence is Maturase K (506 aa).

This sequence belongs to the intron maturase 2 family. MatK subfamily.

Its subcellular location is the plastid. The protein localises to the chloroplast. Usually encoded in the trnK tRNA gene intron. Probably assists in splicing its own and other chloroplast group II introns. The polypeptide is Maturase K (Trifolium beckwithii (Beckwith's clover)).